A 259-amino-acid polypeptide reads, in one-letter code: HTH-type transcriptional regulator TtgV (259 aa).

Positions 14 to 76 (IQVIARAASI…GPAGGFRLGP (63 aa)) constitute an HTH iclR-type domain. Positions 36–59 (LAAIAQLVGLPRSTVQRIINALEE) form a DNA-binding region, H-T-H motif. Positions 89–253 (ILSLVKPYLR…KLNIERAIGR (165 aa)) constitute an IclR-ED domain.

In terms of biological role, represses the expression of the ttgGHI and ttgVW operons. Binds to the ttgGHI / ttgVW intergenic region, probably preventing binding of RNA polymerase; ttgV dissociates from this region in the presence of 1-hexanol. The protein is HTH-type transcriptional regulator TtgV (ttgV) of Pseudomonas putida (strain DOT-T1E).